A 274-amino-acid chain; its full sequence is Ribose-5-phosphate isomerase (274 aa).

Belongs to the ribose 5-phosphate isomerase family.

Its subcellular location is the cytoplasm. It carries out the reaction aldehydo-D-ribose 5-phosphate = D-ribulose 5-phosphate. Its pathway is carbohydrate degradation; pentose phosphate pathway; D-ribose 5-phosphate from D-ribulose 5-phosphate (non-oxidative stage): step 1/1. In Kluyveromyces lactis (strain ATCC 8585 / CBS 2359 / DSM 70799 / NBRC 1267 / NRRL Y-1140 / WM37) (Yeast), this protein is Ribose-5-phosphate isomerase (RKI1).